The chain runs to 433 residues: Glucose-6-phosphate isomerase (433 aa).

The active-site Proton donor is the Glu-285. Active-site residues include His-306 and Lys-421.

This sequence belongs to the GPI family.

The protein localises to the cytoplasm. It catalyses the reaction alpha-D-glucose 6-phosphate = beta-D-fructose 6-phosphate. Its pathway is carbohydrate biosynthesis; gluconeogenesis. The protein operates within carbohydrate degradation; glycolysis; D-glyceraldehyde 3-phosphate and glycerone phosphate from D-glucose: step 2/4. Its function is as follows. Catalyzes the reversible isomerization of glucose-6-phosphate to fructose-6-phosphate. The sequence is that of Glucose-6-phosphate isomerase from Mycoplasma mobile (strain ATCC 43663 / 163K / NCTC 11711) (Mesomycoplasma mobile).